The sequence spans 606 residues: Glucose methanol choline oxidoreductase atC (606 aa).

Residues 1-19 form the signal peptide; the sequence is MRVFPTYIAVSGLFGGAFA. 8 N-linked (GlcNAc...) asparagine glycosylation sites follow: N43, N69, N87, N290, N368, N418, N421, and N552.

Belongs to the GMC oxidoreductase family.

The enzyme catalyses terremutin + A = terreate + AH2. The protein operates within secondary metabolite biosynthesis. Functionally, glucose methanol choline oxidoreductase; part of the gene cluster that mediates the biosynthesis of terreic acid, a quinone epoxide inhibitor of Bruton's tyrosine kinase. The first step of the pathway is the synthesis of 6-methylsalicylic acid (6-MSA) by the 6-methylsalicylic acid synthase atX. In the biosynthesis of 6-MSA, atX utilizes one acetyl-CoA and three malonyl-CoAs as its substrates and catalyzes a series of programmed reactions including Claisen condensation, reduction, aldol cyclization, and the hydrolytic cleavage that yields 6-MSA. The 6-methylsalicylate 1-monooxygenase atA then catalyzes the decarboxylative hydroxylation of 6-MSA to 3-methylcatechol. The next step is the conversion of 3-methylcatechol to 3-methyl-1,2,4-benzenetriol by cytochrome P450 monooxygenase atE, which is enhanced by cytochrome P450 monooxygenase atG. Then, the epoxidase atD catalyzes the epoxidation and hydroxyl oxidation of 3-methyl-1,2,4-benzenetriol to terremutin. Lastly, GMC oxidoreductase atC oxidizes terremutin to terreic acid. The sequence is that of Glucose methanol choline oxidoreductase atC from Aspergillus terreus (strain NIH 2624 / FGSC A1156).